Consider the following 239-residue polypeptide: MNKNEELDEDELLKKCIICPPVPKALKKYWNNRYNLFSRFDEGIWLDYQSWYSVTPEKVAVAIAKSVVDFIQPELIIDAFSGCGGNTIQFAKYCPVISIEIDPIKIAMAKHNLEIYGIPSSRVTFIQGDVLDTFKSLQFAKDYRSLVFMSPPWGGPSYSGKTVYSLNDLNPYAFDVLFKEATRISPYVAAFLPRNTDVKELAAYGSIHNKPYITNFLFEGYAKAICCYFNMKGAIARKI.

It belongs to the methyltransferase superfamily. Trimethylguanosine synthase family. Monomer. Interacts with mug174; both proteins are required to maintain Cajal body integrity.

It localises to the nucleus. It is found in the cajal body. It catalyses the reaction a 5'-end (N(7)-methyl 5'-triphosphoguanosine)-ribonucleoside in snRNA + S-adenosyl-L-methionine = a 5'-end (N(2),N(7)-dimethyl 5'-triphosphoguanosine)-ribonucleoside in snRNA + S-adenosyl-L-homocysteine + H(+). The enzyme catalyses a 5'-end (N(7)-methyl 5'-triphosphoguanosine)-ribonucleoside in snoRNA + S-adenosyl-L-methionine = a 5'-end (N(2),N(7)-dimethyl 5'-triphosphoguanosine)-ribonucleoside in snoRNA + S-adenosyl-L-homocysteine + H(+). The catalysed reaction is a 5'-end (N(2),N(7)-dimethyl 5'-triphosphoguanosine)-ribonucleoside in snRNA + S-adenosyl-L-methionine = a 5'-end (N(2),N(2),N(7)-trimethyl 5'-triphosphoguanosine)-ribonucleoside in snRNA + S-adenosyl-L-homocysteine + H(+). It carries out the reaction a 5'-end (N(2),N(7)-dimethyl 5'-triphosphoguanosine)-ribonucleoside in snoRNA + S-adenosyl-L-methionine = a 5'-end (N(2),N(2),N(7)-trimethyl 5'-triphosphoguanosine)-ribonucleoside in snoRNA + S-adenosyl-L-homocysteine + H(+). Its activity is regulated as follows. Substrate inhibited by S-adenosyl-L-homocysteine. Its function is as follows. Catalyzes the two serial methylation steps for the conversion of the 7-monomethylguanosine (m(7)G) caps of snRNAs and snoRNAs to a 2,2,7-trimethylguanosine (m(2,2,7)G) cap structure. The enzyme is specific for guanine, and N7 methylation must precede N2 methylation. Required for pre-mRNA splicing, pre-rRNA processing and small ribosomal subunit synthesis. Involved in nucleolar structural organization. The chain is Trimethylguanosine synthase (tgs1) from Schizosaccharomyces pombe (strain 972 / ATCC 24843) (Fission yeast).